Reading from the N-terminus, the 735-residue chain is MLKLFSAFRKDKIWDFDGGIHPPEMKTQSNGTPLRQVPLAPRFVIPLKQHIGAEGELCVSVGDRVLRGQALTRGRGRMLPVHAPTSGTVIAIAPHSTAHPSALAELSVIIDADGEDRWIEREGWSDYRAHSREALIERIHQYGVAGLGGAGFPTGVKLQGGGDKITTLIINAAECEPYITADDRLMQDCAAQIVEGIRILAHILQPREVLIGIEDNKPQAISMLRAVLADAHDISLRVIPTKYPSGGAKQLTQILTGKQVPHGGRSSDIGVLMQNVGTAYAVKRAVVDGEPITERVVTLTGEAVSRPGNVWARLGTPVRHLLNDAGFCPSADQMVIMGGPLMGFTLPWLDVPVVKITNCLLAPSVTEMGAPQEEKSCIRCSACADACPADLLPQQLYWFSKGQQHDKATAHHIADCIECGACAWVCPSNIPLVQYFRQEKAEINAIRLEEKRAAEAKARFEARQARLEREKAARLARHKSAAVQPAAKDQDAIAAALARVKEKQAQATQPVVIQAGSLPDNSAVIAAREARKAQARAKQAAHPVADSAISGGDPRKAAVEAAIARAKARKQEQQAGSEPAEPVDPRKAAVEAAIARAKARKQEQQAGSEPAEAVDPRKAAVEAAIARAKARKQEQQAGGEPAEAVDPRKAAVEAAIARAKARKQEQQTGSEPAEPVDPRKAAVEAAIARAKARKQEQQTGSEPAEPADPRKAAVAAAIARVQAKKAAQQQVVNED.

2 consecutive 4Fe-4S ferredoxin-type domains span residues 368–397 (MGAP…QQLY) and 407–436 (KATA…VQYF). [4Fe-4S] cluster is bound by residues cysteine 377, cysteine 380, cysteine 383, cysteine 387, cysteine 416, cysteine 419, cysteine 422, and cysteine 426. Residues 534 to 716 (QARAKQAAHP…ADPRKAAVAA (183 aa)) are disordered.

It belongs to the 4Fe4S bacterial-type ferredoxin family. RnfC subfamily. As to quaternary structure, the complex is composed of six subunits: RsxA, RsxB, RsxC, RsxD, RsxE and RsxG. [4Fe-4S] cluster serves as cofactor.

It is found in the cell inner membrane. Its function is as follows. Part of a membrane-bound complex that couples electron transfer with translocation of ions across the membrane. Required to maintain the reduced state of SoxR. The sequence is that of Ion-translocating oxidoreductase complex subunit C from Salmonella agona (strain SL483).